The primary structure comprises 295 residues: UDP-N-acetylenolpyruvoylglucosamine reductase (295 aa).

The FAD-binding PCMH-type domain maps to 23 to 188; it reads KVGGPADFLA…ISAKFALKPG (166 aa). Arg-167 is an active-site residue. Ser-217 acts as the Proton donor in catalysis. Residue Glu-287 is part of the active site.

Belongs to the MurB family. It depends on FAD as a cofactor.

Its subcellular location is the cytoplasm. The enzyme catalyses UDP-N-acetyl-alpha-D-muramate + NADP(+) = UDP-N-acetyl-3-O-(1-carboxyvinyl)-alpha-D-glucosamine + NADPH + H(+). It participates in cell wall biogenesis; peptidoglycan biosynthesis. Functionally, cell wall formation. The sequence is that of UDP-N-acetylenolpyruvoylglucosamine reductase from Streptococcus pyogenes serotype M49 (strain NZ131).